The sequence spans 641 residues: 1-deoxy-D-xylulose-5-phosphate synthase (641 aa).

Residues His-79 and 120-122 (AHS) each bind thiamine diphosphate. Asp-151 serves as a coordination point for Mg(2+). Thiamine diphosphate is bound by residues 152 to 153 (GA), Asn-180, Tyr-290, and Glu-372. Asn-180 contacts Mg(2+).

Belongs to the transketolase family. DXPS subfamily. As to quaternary structure, homodimer. Requires Mg(2+) as cofactor. The cofactor is thiamine diphosphate.

The catalysed reaction is D-glyceraldehyde 3-phosphate + pyruvate + H(+) = 1-deoxy-D-xylulose 5-phosphate + CO2. It participates in metabolic intermediate biosynthesis; 1-deoxy-D-xylulose 5-phosphate biosynthesis; 1-deoxy-D-xylulose 5-phosphate from D-glyceraldehyde 3-phosphate and pyruvate: step 1/1. Catalyzes the acyloin condensation reaction between C atoms 2 and 3 of pyruvate and glyceraldehyde 3-phosphate to yield 1-deoxy-D-xylulose-5-phosphate (DXP). The chain is 1-deoxy-D-xylulose-5-phosphate synthase from Bradyrhizobium sp. (strain BTAi1 / ATCC BAA-1182).